The sequence spans 305 residues: MGHALCVCSRGTVIIDNKRYLFVQKLGEGGFSYVDLVEGLHDGHFYALKRILCHEQQDQEEAQREAEMHRLFQHPNILRLMAYSLKERGAKHEAWLLLPFFKKGTLWNEIERLKDQGSFLTEDQILPLLLGISRGLEAIHAKGYAHRDLKPTNILLGDEGQPVLMDLGSMNQACIQVEGSRQALALQDWAAQRCTISYRAPELFSVQSHCVIDERTDVWSLGCVLYAMMFGEGPYDMVFQKGDSVALAVQNELSIPQSPRHSSALRQLLSSMMTVDPQQRPHIPVLLSQLEALQPPAPGQHTTQI.

The N-myristoyl glycine moiety is linked to residue glycine 2. S-palmitoyl cysteine attachment occurs at residues cysteine 6 and cysteine 8. The 274-residue stretch at 20 to 293 folds into the Protein kinase domain; that stretch reads YLFVQKLGEG…PVLLSQLEAL (274 aa). Residues 26 to 34 and lysine 49 each bind ATP; that span reads LGEGGFSYV. Aspartate 148 acts as the Proton acceptor in catalysis. The tract at residues 166–202 is activation loop; the sequence is DLGSMNQACIQVEGSRQALALQDWAAQRCTISYRAPE. Serine 197 bears the Phosphoserine; by autocatalysis mark. Phosphotyrosine; by autocatalysis is present on tyrosine 198.

It belongs to the protein kinase superfamily. Ser/Thr protein kinase family. As to quaternary structure, monomer. Interacts with DRG1 (via its N-terminal); the interaction phosphorylates DRG1. Mainly autophosphorylated on serine/threonine residues. Also autophosphorylated on Tyr-198. As to expression, ubiquitously expressed at low levels. Relatively higher levels in testis, kidney and liver.

It is found in the cytoplasm. Its subcellular location is the perinuclear region. The protein localises to the membrane. The catalysed reaction is L-seryl-[protein] + ATP = O-phospho-L-seryl-[protein] + ADP + H(+). It carries out the reaction L-threonyl-[protein] + ATP = O-phospho-L-threonyl-[protein] + ADP + H(+). It catalyses the reaction L-tyrosyl-[protein] + ATP = O-phospho-L-tyrosyl-[protein] + ADP + H(+). In terms of biological role, membrane-associated protein kinase that phosphorylates on serine and threonine residues. In vitro substrates include DRG1, ENO1 and EIF4EBP1. Also autophosphorylates. May be involved in secretory vesicle trafficking or intracellular signaling. May have a role in regulating stromal-epithelial interactions that occur during ductal morphogenesis in the mammary gland. May be involved in TGF-beta signaling. Able to autophosphorylate on Tyr residue; it is however unclear whether it has tyrosine-protein kinase toward other proteins. This Mus musculus (Mouse) protein is Serine/threonine-protein kinase 16 (Stk16).